We begin with the raw amino-acid sequence, 272 residues long: Phytolongin Phyl2.2 (272 aa).

Positions 12–116 (CIAKGTVVLA…LINPVSHCLQ (105 aa)) constitute a Longin domain. Residues 243-263 (WVVLMFDFCICAVLFGIWLWI) traverse the membrane as a helical; Anchor for type IV membrane protein segment.

Belongs to the synaptobrevin family.

The protein localises to the membrane. Functionally, non-SNARE longin protein involved in membrane-trafficking machinery. This Arabidopsis thaliana (Mouse-ear cress) protein is Phytolongin Phyl2.2.